The primary structure comprises 294 residues: Bifunctional protein FolD (294 aa).

Residues 175–177 (GVS) and I243 each bind NADP(+).

Belongs to the tetrahydrofolate dehydrogenase/cyclohydrolase family. As to quaternary structure, homodimer.

It carries out the reaction (6R)-5,10-methylene-5,6,7,8-tetrahydrofolate + NADP(+) = (6R)-5,10-methenyltetrahydrofolate + NADPH. The catalysed reaction is (6R)-5,10-methenyltetrahydrofolate + H2O = (6R)-10-formyltetrahydrofolate + H(+). Its pathway is one-carbon metabolism; tetrahydrofolate interconversion. Catalyzes the oxidation of 5,10-methylenetetrahydrofolate to 5,10-methenyltetrahydrofolate and then the hydrolysis of 5,10-methenyltetrahydrofolate to 10-formyltetrahydrofolate. The protein is Bifunctional protein FolD of Xanthomonas campestris pv. campestris (strain 8004).